A 509-amino-acid chain; its full sequence is Glucose-1-phosphate adenylyltransferase large subunit 4, chloroplastic/amyloplastic (509 aa).

Residues 1–36 (MATCSWAATTAAAAPPRPPARCRSRVAALRRTAAAS) constitute a chloroplast transit peptide.

This sequence belongs to the bacterial/plant glucose-1-phosphate adenylyltransferase family. As to quaternary structure, heterotetramer composed of two small and two large subunits. In terms of tissue distribution, expressed in leaves and stems.

It is found in the plastid. The protein resides in the chloroplast. The catalysed reaction is alpha-D-glucose 1-phosphate + ATP + H(+) = ADP-alpha-D-glucose + diphosphate. The protein operates within glycan biosynthesis; starch biosynthesis. With respect to regulation, activated by 3'phosphoglycerate, inhibited by orthophosphate. Allosteric regulation. Its function is as follows. Involved in synthesis of starch. Catalyzes the synthesis of ADP-glucose, a molecule that serves as an activated glycosyl donor for alpha-1,4-glucan synthesis. Essential for starch synthesis in leaf chloroplasts. This is Glucose-1-phosphate adenylyltransferase large subunit 4, chloroplastic/amyloplastic from Oryza sativa subsp. japonica (Rice).